Here is a 447-residue protein sequence, read N- to C-terminus: MQEDKYLTVSALTNYIKRKFDADPYLHRVYLVGEISNFRLRTNSHQYFSLKDENAKISAIMFKSAFAKVKFQPEEGMRVIVSGRISLYPGNGSYQIYVDSMQPDGVGALYQAYEQLKIKLSQEGLFEAPKLPIPKYPRKIAIVTSPSGAVIRDIITTVSRRYPIVQLVLFPALVQGNEAANSIAAQIKMINTLDDFDTIIIGRGGGSIEDLWPFNEEVVARAIFASKLPVISSVGHETDTTIADLVADMRAATPTAAAELATPVLTDILEELQKLQLQTIVAFRNILKMRSQQVQHLQQSYIFQEPQRLYEGYVQNVDILTEKLISLEKQQITTAEGSFKTLNSRLLANTPASRIKMAKQNVEHLRQMTNNNITNRFSKYANDLNSLIGSLDTLSPLKIMSRGYTYVTRDTKVVKSIEDLSIDDKIQLNFSDGSANAVIKTINSEDK.

It belongs to the XseA family. Heterooligomer composed of large and small subunits.

Its subcellular location is the cytoplasm. The enzyme catalyses Exonucleolytic cleavage in either 5'- to 3'- or 3'- to 5'-direction to yield nucleoside 5'-phosphates.. Bidirectionally degrades single-stranded DNA into large acid-insoluble oligonucleotides, which are then degraded further into small acid-soluble oligonucleotides. This Pediococcus pentosaceus (strain ATCC 25745 / CCUG 21536 / LMG 10740 / 183-1w) protein is Exodeoxyribonuclease 7 large subunit.